A 218-amino-acid chain; its full sequence is Large ribosomal subunit protein bL25 (218 aa).

2 disordered regions span residues 1–20 (MKTHELKASPRTTRGNGPAR) and 185–218 (PTAAALPEEGEEGEEGEEGGEGGEAEGAEAASEE). A compositionally biased stretch (acidic residues) spans 192-218 (EEGEEGEEGEEGGEGGEAEGAEAASEE).

It belongs to the bacterial ribosomal protein bL25 family. CTC subfamily. In terms of assembly, part of the 50S ribosomal subunit; part of the 5S rRNA/L5/L18/L25 subcomplex. Contacts the 5S rRNA. Binds to the 5S rRNA independently of L5 and L18.

Functionally, this is one of the proteins that binds to the 5S RNA in the ribosome where it forms part of the central protuberance. The sequence is that of Large ribosomal subunit protein bL25 from Desulfatibacillum aliphaticivorans.